Here is a 193-residue protein sequence, read N- to C-terminus: Ribonuclease HII (193 aa).

An RNase H type-2 domain is found at 15–193 (CIVAGIDEAG…PYHRRSFRCC (179 aa)). 3 residues coordinate a divalent metal cation: Asp21, Glu22, and Asp112.

It belongs to the RNase HII family. Requires Mn(2+) as cofactor. Mg(2+) serves as cofactor.

The protein localises to the cytoplasm. It carries out the reaction Endonucleolytic cleavage to 5'-phosphomonoester.. In terms of biological role, endonuclease that specifically degrades the RNA of RNA-DNA hybrids. The protein is Ribonuclease HII of Rickettsia rickettsii (strain Iowa).